A 675-amino-acid polypeptide reads, in one-letter code: Potassium-transporting ATPase ATP-binding subunit 2 (675 aa).

4 helical membrane-spanning segments follow: residues 34-54, 65-85, 216-236, and 245-265; these read IMFV…FPDI, LITI…SEAF, IALF…IVTL, and LILP…TTIG. Asp304 (4-aspartylphosphate intermediate) is an active-site residue. Residues Asp341, Glu345, 372–379, and Lys390 each bind ATP; that span reads FTAETRMS. Positions 513 and 517 each coordinate Mg(2+). Transmembrane regions (helical) follow at residues 569–591, 611–631, and 644–664; these read ALTT…ALMM, AIIS…PIAM, and IFIN…FLGI.

It belongs to the cation transport ATPase (P-type) (TC 3.A.3) family. Type IA subfamily. As to quaternary structure, the system is composed of three essential subunits: KdpA, KdpB and KdpC.

The protein resides in the cell membrane. The enzyme catalyses K(+)(out) + ATP + H2O = K(+)(in) + ADP + phosphate + H(+). Its function is as follows. Part of the high-affinity ATP-driven potassium transport (or Kdp) system, which catalyzes the hydrolysis of ATP coupled with the electrogenic transport of potassium into the cytoplasm. This subunit is responsible for energy coupling to the transport system and for the release of the potassium ions to the cytoplasm. The polypeptide is Potassium-transporting ATPase ATP-binding subunit 2 (Staphylococcus aureus (strain MRSA252)).